Consider the following 286-residue polypeptide: Pyridoxal kinase PdxY (286 aa).

Substrate is bound by residues S9 and 44–45; that span reads MQ. ATP is bound by residues D111, E147, and K180. Residue D221 coordinates substrate.

This sequence belongs to the pyridoxine kinase family. PdxY subfamily. Homodimer. Requires Mg(2+) as cofactor.

It carries out the reaction pyridoxal + ATP = pyridoxal 5'-phosphate + ADP + H(+). Its pathway is cofactor metabolism; pyridoxal 5'-phosphate salvage; pyridoxal 5'-phosphate from pyridoxal: step 1/1. Pyridoxal kinase involved in the salvage pathway of pyridoxal 5'-phosphate (PLP). Catalyzes the phosphorylation of pyridoxal to PLP. The sequence is that of Pyridoxal kinase PdxY from Burkholderia lata (strain ATCC 17760 / DSM 23089 / LMG 22485 / NCIMB 9086 / R18194 / 383).